The chain runs to 278 residues: NAD kinase (278 aa).

Asp56 acts as the Proton acceptor in catalysis. NAD(+) is bound by residues 56 to 57, 132 to 133, Arg158, Asp160, and 171 to 176; these read DG, NE, and TAYNKS.

It belongs to the NAD kinase family. A divalent metal cation serves as cofactor.

It is found in the cytoplasm. It catalyses the reaction NAD(+) + ATP = ADP + NADP(+) + H(+). Functionally, involved in the regulation of the intracellular balance of NAD and NADP, and is a key enzyme in the biosynthesis of NADP. Catalyzes specifically the phosphorylation on 2'-hydroxyl of the adenosine moiety of NAD to yield NADP. The protein is NAD kinase of Streptococcus agalactiae serotype III (strain NEM316).